A 134-amino-acid polypeptide reads, in one-letter code: MTKVTTQSLETLVETLSSLTVLELSALKKLLEEKWDVTAAAPVMAVAAGAAGAGAEAAPAESTEFAVTLEEVPADKKIGVLKVVREVTGLALKEAKEMTEGLPKVVKEKTSKSDAEETVKKLQEAGAKASFKGL.

This sequence belongs to the bacterial ribosomal protein bL12 family. In terms of assembly, homodimer. Part of the ribosomal stalk of the 50S ribosomal subunit. Forms a multimeric L10(L12)X complex, where L10 forms an elongated spine to which 2 to 4 L12 dimers bind in a sequential fashion. Binds GTP-bound translation factors.

In terms of biological role, forms part of the ribosomal stalk which helps the ribosome interact with GTP-bound translation factors. Is thus essential for accurate translation. The chain is Large ribosomal subunit protein bL12 from Chlamydia abortus (strain DSM 27085 / S26/3) (Chlamydophila abortus).